Reading from the N-terminus, the 333-residue chain is Phosphate acyltransferase (333 aa).

It belongs to the PlsX family. In terms of assembly, homodimer. Probably interacts with PlsY.

The protein localises to the cytoplasm. The enzyme catalyses a fatty acyl-[ACP] + phosphate = an acyl phosphate + holo-[ACP]. The protein operates within lipid metabolism; phospholipid metabolism. Catalyzes the reversible formation of acyl-phosphate (acyl-PO(4)) from acyl-[acyl-carrier-protein] (acyl-ACP). This enzyme utilizes acyl-ACP as fatty acyl donor, but not acyl-CoA. This Clostridium beijerinckii (strain ATCC 51743 / NCIMB 8052) (Clostridium acetobutylicum) protein is Phosphate acyltransferase.